The sequence spans 397 residues: LIM/homeobox protein Lhx3 (397 aa).

2 LIM zinc-binding domains span residues 31–81 (CAGC…CKDD) and 90–144 (CAAC…CKAD). The residue at position 63 (threonine 63) is a Phosphothreonine. A Phosphoserine modification is found at serine 71. The homeobox DNA-binding region spans 157–216 (AKRPRTTITAKQLETLKSAYNTSPKPARHVREQLSSETGLDMRVVQVWFQNRRAKEKRLK). A disordered region spans residues 212-397 (EKRLKKDAGR…WLDEVDHAQF (186 aa)). At tyrosine 227 the chain carries Phosphotyrosine. Residues serine 234 and serine 238 each carry the phosphoserine modification. Over residues 316–331 (GVPPSPAAPQSLPGPQ) the composition is skewed to pro residues.

As to quaternary structure, interacts with POU1F1. At neuronal promoters, interacts with LDB1, in motor neurons LDB1 is displaced by ISL1 and a ternary complex is formed in which ISL1 contacts both LHX3 and LDB1; allosteric structural changes in the DNA binding domain of LHX3, induced by the ISL1-LHX3 interaction, may explain differences in sequence specificity of the different complexes. Interacts with LDB2. May interact with CITED2/MRG1.

Its subcellular location is the nucleus. Functionally, transcription factor. Recognizes and binds to the consensus sequence motif 5'-AATTAATTA-3' in the regulatory elements of target genes, such as glycoprotein hormones alpha chain CGA and visual system homeobox CHX10, positively modulating transcription; transcription can be co-activated by LDB2. Synergistically enhances transcription from the prolactin promoter in cooperation with POU1F1/Pit-1. Required for the establishment of the specialized cells of the pituitary gland and the nervous system. Involved in the development of interneurons and motor neurons in cooperation with LDB1 and ISL1. The polypeptide is LIM/homeobox protein Lhx3 (LHX3) (Homo sapiens (Human)).